We begin with the raw amino-acid sequence, 102 residues long: Small ribosomal subunit protein uS10 (102 aa).

This sequence belongs to the universal ribosomal protein uS10 family. As to quaternary structure, part of the 30S ribosomal subunit.

Involved in the binding of tRNA to the ribosomes. This chain is Small ribosomal subunit protein uS10, found in Thermosipho africanus (strain TCF52B).